We begin with the raw amino-acid sequence, 77 residues long: Serine protease inhibitor 1 (77 aa).

An N-terminal signal peptide occupies residues 1–17 (MMFTPLIVLTLLVLATA). 5 cysteine pairs are disulfide-bonded: Cys-21-Cys-53, Cys-30-Cys-48, Cys-33-Cys-44, Cys-37-Cys-74, and Cys-55-Cys-68. Residues 21-74 (CGPNEQWSDCPGCELQCGESDKPCPAMCGDPKCYCSPDQYRRIPDGRCIRKIQC) form the TIL domain.

The protein resides in the secreted. Defends the organism against the host's proteinases. This chain is Serine protease inhibitor 1, found in Anisakis simplex (Herring worm).